Reading from the N-terminus, the 215-residue chain is Probable phosphoglycerate mutase GpmB (215 aa).

Residues Arg-8–Asn-15, Gln-21–Gly-22, Arg-58, Arg-60, Glu-82–Met-85, Arg-104–Arg-105, and Gly-151–Ile-152 each bind substrate. His-9 functions as the Tele-phosphohistidine intermediate in the catalytic mechanism. The Proton donor/acceptor role is filled by Glu-82.

It belongs to the phosphoglycerate mutase family. GpmB subfamily.

It catalyses the reaction (2R)-2-phosphoglycerate = (2R)-3-phosphoglycerate. It participates in carbohydrate degradation; glycolysis; pyruvate from D-glyceraldehyde 3-phosphate: step 3/5. In Citrobacter koseri (strain ATCC BAA-895 / CDC 4225-83 / SGSC4696), this protein is Probable phosphoglycerate mutase GpmB.